The chain runs to 326 residues: Aspartate carbamoyltransferase catalytic subunit (326 aa).

The carbamoyl phosphate site is built by Arg-60 and Thr-61. Position 88 (Lys-88) interacts with L-aspartate. Carbamoyl phosphate contacts are provided by Arg-110, His-143, and Gln-146. Residues Arg-183 and Arg-239 each contribute to the L-aspartate site. Positions 280 and 281 each coordinate carbamoyl phosphate.

The protein belongs to the aspartate/ornithine carbamoyltransferase superfamily. ATCase family. In terms of assembly, heterododecamer (2C3:3R2) of six catalytic PyrB chains organized as two trimers (C3), and six regulatory PyrI chains organized as three dimers (R2).

The catalysed reaction is carbamoyl phosphate + L-aspartate = N-carbamoyl-L-aspartate + phosphate + H(+). It participates in pyrimidine metabolism; UMP biosynthesis via de novo pathway; (S)-dihydroorotate from bicarbonate: step 2/3. In terms of biological role, catalyzes the condensation of carbamoyl phosphate and aspartate to form carbamoyl aspartate and inorganic phosphate, the committed step in the de novo pyrimidine nucleotide biosynthesis pathway. This Microcystis aeruginosa (strain NIES-843 / IAM M-2473) protein is Aspartate carbamoyltransferase catalytic subunit.